Reading from the N-terminus, the 246-residue chain is Small ribosomal subunit protein uS3 (246 aa).

The KH type-2 domain maps to 38–106 (IRQYLNARLA…DVQINIYEIR (69 aa)). The tract at residues 218–246 (VAKNQSRRPNAQGGNNRGGDRNRRRKGNR) is disordered.

This sequence belongs to the universal ribosomal protein uS3 family. As to quaternary structure, part of the 30S ribosomal subunit. Forms a tight complex with proteins S10 and S14.

Its function is as follows. Binds the lower part of the 30S subunit head. Binds mRNA in the 70S ribosome, positioning it for translation. The protein is Small ribosomal subunit protein uS3 of Porphyromonas gingivalis (strain ATCC 33277 / DSM 20709 / CIP 103683 / JCM 12257 / NCTC 11834 / 2561).